The chain runs to 320 residues: Foldase protein PrsA (320 aa).

The N-terminal stretch at 1-20 (MKMINKLIVPVTASALLLGA) is a signal peptide. A lipid anchor (N-palmitoyl cysteine) is attached at cysteine 21. Residue cysteine 21 is the site of S-diacylglycerol cysteine attachment. Positions 139–245 (EDSKKASHIL…FGYHIIKADK (107 aa)) constitute a PpiC domain. Positions 159-198 (EGLDDKEAKQKAEEIQKEVSKDPSKFGEIAKKESMDTGSA) are disordered.

This sequence belongs to the PrsA family.

The protein localises to the cell membrane. The catalysed reaction is [protein]-peptidylproline (omega=180) = [protein]-peptidylproline (omega=0). Plays a major role in protein secretion by helping the post-translocational extracellular folding of several secreted proteins. This Staphylococcus aureus (strain Mu3 / ATCC 700698) protein is Foldase protein PrsA.